We begin with the raw amino-acid sequence, 603 residues long: Glutathione-regulated potassium-efflux system protein KefB (603 aa).

The next 13 helical transmembrane spans lie at 5-25, 29-49, 55-75, 87-107, 115-135, 152-172, 180-202, 207-227, 230-250, 268-288, 291-311, 326-346, and 356-376; these read ALLT…PIAA, IGAV…GLGF, AILH…GLEL, IFGV…GALY, SALI…LQLM, VLLF…ILAG, WERI…YLVR, FIAA…LVLG, LFME…GILL, GLLL…GILY, IVKI…VLYF, FAGV…AAAS, and PLLL…MQLI. The RCK N-terminal domain maps to 400 to 521; it reads EPQVIVVGFG…VRHFSRETFS (122 aa).

The protein belongs to the monovalent cation:proton antiporter 2 (CPA2) transporter (TC 2.A.37) family. KefB subfamily. Interacts with the regulatory subunit KefG.

The protein localises to the cell inner membrane. Functionally, pore-forming subunit of a potassium efflux system that confers protection against electrophiles. Catalyzes K(+)/H(+) antiport. The polypeptide is Glutathione-regulated potassium-efflux system protein KefB (Pectobacterium carotovorum subsp. carotovorum (strain PC1)).